The chain runs to 137 residues: MRTLWIMAVLLVGVEGSLFELGKMILQETGKNPAKSYGAYGCNCGVLGRGKPKDATDRCCYVHKCCYKKLTGCDPKKDRYSYSWKDKTIVCGENNPCLKELCECDKAVAICLRENLGTYNKKYRYHLKPFCKKADPC.

The signal sequence occupies residues 1-16 (MRTLWIMAVLLVGVEG). Disulfide bonds link cysteine 42-cysteine 131, cysteine 44-cysteine 60, cysteine 59-cysteine 111, cysteine 65-cysteine 137, cysteine 66-cysteine 104, cysteine 73-cysteine 97, and cysteine 91-cysteine 102. The tract at residues 121-133 (KKYRYHLKPFCKK) is important for membrane-damaging activities in eukaryotes and bacteria; heparin-binding.

The protein belongs to the phospholipase A2 family. Group II subfamily. K49 sub-subfamily. Homodimer; non-covalently linked (probable alternative/compact dimer conformation in solution). Binds to heparin. In terms of tissue distribution, expressed by the venom gland.

The protein resides in the secreted. Its activity is regulated as follows. Suramin inhibits both myotoxic and muscle-paralyzing activities. Chicoric acid inhibits myotoxic activity. Zinc ions inhibits the myotoxic activity and the neuromuscular blockade. Heparin inhibits myotoxic activity. Functionally, snake venom phospholipase A2 homolog that lacks enzymatic activity. Shows local myotoxic activity. Induces inflammation, since it induces edema and leukocytes infiltration. In addition, it induces NLRP3 NLRP3, ASC (PYCARD), caspase-1 (CASP1), and IL-1beta (IL1B) gene expression in the gastrocnemius muscle, showing that it is able to activate NLRP3 inflammasome. It also damages artificial and myoblast membranes by a calcium-independent mechanism, has bactericidal activity, and induces neuromuscular blockade. A model of myotoxic mechanism has been proposed: an apo Lys49-PLA2 is activated by the entrance of a hydrophobic molecule (e.g. fatty acid) at the hydrophobic channel of the protein leading to a reorientation of a monomer. This reorientation causes a transition between 'inactive' to 'active' states, causing alignment of C-terminal and membrane-docking sites (MDoS) side-by-side and putting the membrane-disruption sites (MDiS) in the same plane, exposed to solvent and in a symmetric position for both monomers. The MDoS region stabilizes the toxin on membrane by the interaction of charged residues with phospholipid head groups. Subsequently, the MDiS region destabilizes the membrane with penetration of hydrophobic residues. This insertion causes a disorganization of the membrane, allowing an uncontrolled influx of ions (i.e. calcium and sodium), and eventually triggering irreversible intracellular alterations and cell death. The polypeptide is Basic phospholipase A2 homolog bothropstoxin-I (Bothrops jararacussu (Jararacussu)).